Consider the following 245-residue polypeptide: 4-hydroxy-tetrahydrodipicolinate reductase (245 aa).

NAD(+)-binding positions include Gly7–Val12, Gly75–Thr77, and Ala102–Phe105. His132 acts as the Proton donor/acceptor in catalysis. A (S)-2,3,4,5-tetrahydrodipicolinate-binding site is contributed by His133. Residue Lys136 is the Proton donor of the active site. Gly142–Thr143 is a binding site for (S)-2,3,4,5-tetrahydrodipicolinate.

The protein belongs to the DapB family.

The protein resides in the cytoplasm. It carries out the reaction (S)-2,3,4,5-tetrahydrodipicolinate + NAD(+) + H2O = (2S,4S)-4-hydroxy-2,3,4,5-tetrahydrodipicolinate + NADH + H(+). The enzyme catalyses (S)-2,3,4,5-tetrahydrodipicolinate + NADP(+) + H2O = (2S,4S)-4-hydroxy-2,3,4,5-tetrahydrodipicolinate + NADPH + H(+). It functions in the pathway amino-acid biosynthesis; L-lysine biosynthesis via DAP pathway; (S)-tetrahydrodipicolinate from L-aspartate: step 4/4. Its function is as follows. Catalyzes the conversion of 4-hydroxy-tetrahydrodipicolinate (HTPA) to tetrahydrodipicolinate. In Mycobacterium sp. (strain KMS), this protein is 4-hydroxy-tetrahydrodipicolinate reductase.